Here is a 94-residue protein sequence, read N- to C-terminus: Neutrophil defensin 3 (94 aa).

Positions 1–19 (MRTLAILAAILLVALQAQA) are cleaved as a signal peptide. Residues 20–38 (EPLQARADEVAAAPEQIAA) constitute a propeptide that is removed on maturation. Disulfide bonds link C66/C94, C68/C83, and C73/C93.

It belongs to the alpha-defensin family. Dimer. In terms of assembly, (Microbial infection) Interacts with herpes virus 1 HHV-1 envelope glycoprotein B; this interaction inhibits viral infection.

Its subcellular location is the secreted. Its function is as follows. Effector molecule of the innate immune system that acts via antibiotic-like properties against a broad array of infectious agents including bacteria, fungi, and viruses. Possesses the ability to neutralize bacterial toxins such as B.anthracis lethal factor, Clostridium difficile cytotoxin B as well as leukocidin produced by Staphylococcus aureus. Also blocks herpes simplex virus infection by interacting with envelope glycoprotein B and thus preventing its binding to heparan sulfate, the receptor for attachment. This Homo sapiens (Human) protein is Neutrophil defensin 3 (DEFA3).